Here is a 304-residue protein sequence, read N- to C-terminus: Oxygen-dependent coproporphyrinogen-III oxidase (304 aa).

Ser-94 serves as a coordination point for substrate. His-98 and His-108 together coordinate a divalent metal cation. His-108 serves as the catalytic Proton donor. 110–112 (NVR) serves as a coordination point for substrate. A divalent metal cation contacts are provided by His-147 and His-177. Residues 242–277 (YVEFNLVYDRGTLFGLQSGGRTESILMSLPPVAHWR) form an important for dimerization region. 260-262 (GGR) contributes to the substrate binding site.

The protein belongs to the aerobic coproporphyrinogen-III oxidase family. Homodimer. Requires a divalent metal cation as cofactor.

Its subcellular location is the cytoplasm. The enzyme catalyses coproporphyrinogen III + O2 + 2 H(+) = protoporphyrinogen IX + 2 CO2 + 2 H2O. Its pathway is porphyrin-containing compound metabolism; protoporphyrin-IX biosynthesis; protoporphyrinogen-IX from coproporphyrinogen-III (O2 route): step 1/1. In terms of biological role, involved in the heme biosynthesis. Catalyzes the aerobic oxidative decarboxylation of propionate groups of rings A and B of coproporphyrinogen-III to yield the vinyl groups in protoporphyrinogen-IX. The protein is Oxygen-dependent coproporphyrinogen-III oxidase of Methylococcus capsulatus (strain ATCC 33009 / NCIMB 11132 / Bath).